Here is a 568-residue protein sequence, read N- to C-terminus: PCNA-interacting partner (568 aa).

Residues 442-555 are disordered; it reads QIPTCVHPAP…RNNKAVSKKL (114 aa). Positions 488-500 are enriched in polar residues; it reads NAWNQTGGKSTQP. Basic and acidic residues predominate over residues 515 to 527; that stretch reads ANRECTEQGREEN.

This sequence belongs to the PARI family.

The protein localises to the cytoplasm. The protein resides in the nucleus. Functionally, required to suppress inappropriate homologous recombination, thereby playing a central role DNA repair and in the maintenance of genomic stability. This Danio rerio (Zebrafish) protein is PCNA-interacting partner (parpbp).